Here is a 285-residue protein sequence, read N- to C-terminus: Probable endonuclease 4 (285 aa).

Zn(2+)-binding residues include His-69, His-109, Glu-145, Asp-179, His-182, His-216, Asp-229, His-231, and Glu-261.

The protein belongs to the AP endonuclease 2 family. Requires Zn(2+) as cofactor.

The enzyme catalyses Endonucleolytic cleavage to 5'-phosphooligonucleotide end-products.. Functionally, endonuclease IV plays a role in DNA repair. It cleaves phosphodiester bonds at apurinic or apyrimidinic (AP) sites, generating a 3'-hydroxyl group and a 5'-terminal sugar phosphate. This chain is Probable endonuclease 4, found in Escherichia fergusonii (strain ATCC 35469 / DSM 13698 / CCUG 18766 / IAM 14443 / JCM 21226 / LMG 7866 / NBRC 102419 / NCTC 12128 / CDC 0568-73).